A 2294-amino-acid chain; its full sequence is Reducing polyketide synthase BOA9 (2294 aa).

The 406-residue stretch at 4–409 (PEPVAIIGMG…GANATAIVEA (406 aa)) folds into the Ketosynthase family 3 (KS3) domain. The segment at 537–853 (IFTGQGAQNA…DYAATLVRGQ (317 aa)) is malonyl-CoA:ACP transacylase (MAT) domain. Ser630 serves as the catalytic For malonyltransferase activity. Residues 930-1067 (HDLLGAILPG…GTVTKKKAVT (138 aa)) form an N-terminal hotdog fold region. The segment at 930–1104 (HDLLGAILPG…LNYGPAFNGL (175 aa)) is dehydratase (DH) domain. In terms of domain architecture, PKS/mFAS DH spans 930-1236 (HDLLGAILPG…CTQYSEALDD (307 aa)). His962 (proton acceptor; for dehydratase activity) is an active-site residue. The segment at 1078–1236 (QEPKAARTWY…CTQYSEALDD (159 aa)) is C-terminal hotdog fold. Residue Asp1142 is the Proton donor; for dehydratase activity of the active site. Residues 1618–1908 (GIFDTIHFKD…KNSRIGRVVV (291 aa)) are enoyl reductase (ER) domain. Residues 1934-2107 (VHTYLLGVLE…LPATTISLTV (174 aa)) are ketoreductase (KR) domain. Residues 2214-2292 (LLLPDILEMI…SLAKKIYDIR (79 aa)) form the Carrier domain. Ser2251 carries the O-(pantetheine 4'-phosphoryl)serine modification.

Its pathway is polyketide biosynthesis. Reducing polyketide synthase; part of the gene cluster B that mediates the biosynthesis of botcinic acid and its botcinin derivatives, acetate-derived polyketides that contribute to virulence when combined with the sesquiterpene botrydial. Botcinic acid and its derivatives have been shown to induce chlorosis and necrosis during host plant infection, but also have antifungal activities. Two polyketide synthases, BOA6 and BOA9, are involved in the biosynthesis of botcinins. BOA6 mediates the formation of the per-methylated tetraketide core by condensation of four units of malonyl-CoA with one unit of acetyl-CoA, which would be methylated in activated methylene groups to yield a bicyclic acid intermediate that could then either be converted to botrylactone derivatives or lose the starter acetate unit through a retro-Claisen type C-C bond cleavage to yield botcinin derivatives. The second polyketide synthase, BOA9, is probably required for the biosynthesis of the tetraketide side chain of botcinins. The methyltransferase (MT) domain within BOA6 is probably responsible for the incorporation of four methyl groups. The trans-enoyl reductase BOA5 might take over the enoyl reductase function of BOA6 that misses an ER domain. The monooxygenases BOA2, BOA3 and BOA4 might be involved in further hydroxylations at C4, C5 and C8, whereas BOA7, close to BOA9, could potentially be involved in the hydroxylation at C4 in the side chain of botcinins. This Botryotinia fuckeliana (strain B05.10) (Noble rot fungus) protein is Reducing polyketide synthase BOA9.